Here is a 113-residue protein sequence, read N- to C-terminus: MNTVRVTFLLVFVLAVSLGQADKDENRMEMQEKTEQGESYLDFAENLLLQKLEELEAKLLEEDSEESRNSRQKRCIGEGVPCDENDPRCCSGLVCLKPTLHGIWYKSYYCYKK.

Residues 1–21 (MNTVRVTFLLVFVLAVSLGQA) form the signal peptide. A propeptide spanning residues 22-74 (DKDENRMEMQEKTEQGESYLDFAENLLLQKLEELEAKLLEEDSEESRNSRQKR) is cleaved from the precursor. Cystine bridges form between cysteine 75–cysteine 90, cysteine 82–cysteine 95, and cysteine 89–cysteine 110.

This sequence belongs to the neurotoxin 14 (magi-1) family. 01 (HNTX-16) subfamily. As to expression, expressed by the venom gland.

The protein resides in the secreted. Its function is as follows. Probable ion channel inhibitor. This is U11-theraphotoxin-Hhn1a from Cyriopagopus hainanus (Chinese bird spider).